We begin with the raw amino-acid sequence, 296 residues long: Polyamine aminopropyltransferase (296 aa).

A PABS domain is found at 5 to 238; that stretch reads ELWYETLHAN…GIMTFAWATQ (234 aa). Residue Gln-33 participates in S-methyl-5'-thioadenosine binding. Residues His-64 and Asp-88 each contribute to the spermidine site. Residues Glu-108 and 140-141 contribute to the S-methyl-5'-thioadenosine site; that span reads DG. Asp-158 serves as the catalytic Proton acceptor. Residue 158-161 participates in spermidine binding; sequence DCTD. Pro-165 serves as a coordination point for S-methyl-5'-thioadenosine.

Belongs to the spermidine/spermine synthase family. In terms of assembly, homodimer or homotetramer.

It is found in the cytoplasm. It catalyses the reaction S-adenosyl 3-(methylsulfanyl)propylamine + putrescine = S-methyl-5'-thioadenosine + spermidine + H(+). It participates in amine and polyamine biosynthesis; spermidine biosynthesis; spermidine from putrescine: step 1/1. Functionally, catalyzes the irreversible transfer of a propylamine group from the amino donor S-adenosylmethioninamine (decarboxy-AdoMet) to putrescine (1,4-diaminobutane) to yield spermidine. This chain is Polyamine aminopropyltransferase, found in Yersinia pseudotuberculosis serotype O:3 (strain YPIII).